Reading from the N-terminus, the 104-residue chain is Large ribosomal subunit protein bL21 (104 aa).

This sequence belongs to the bacterial ribosomal protein bL21 family. As to quaternary structure, part of the 50S ribosomal subunit. Contacts protein L20.

In terms of biological role, this protein binds to 23S rRNA in the presence of protein L20. The polypeptide is Large ribosomal subunit protein bL21 (Streptococcus uberis (strain ATCC BAA-854 / 0140J)).